The chain runs to 173 residues: Calmodulin-like protein 11 (173 aa).

Residues 1 to 26 are compositionally biased toward low complexity; the sequence is MEEIQQQQQQQQQQQQQQQQQQQQQQ. Residues 1 to 27 form a disordered region; sequence MEEIQQQQQQQQQQQQQQQQQQQQQQE. EF-hand domains lie at 31 to 66, 67 to 102, 104 to 139, and 140 to 173; these read EQIM…LDQN, PTEQ…QLQE, DADE…LGEK, and LTDE…MING. Ca(2+) is bound by residues aspartate 44, aspartate 46, aspartate 48, cysteine 50, glutamate 55, aspartate 80, aspartate 82, asparagine 84, threonine 86, glutamate 91, aspartate 117, aspartate 119, asparagine 121, tyrosine 123, glutamate 128, aspartate 153, aspartate 155, aspartate 157, glutamine 159, and glutamate 164.

Belongs to the calmodulin family.

Functionally, potential calcium sensor. The sequence is that of Calmodulin-like protein 11 (CML11) from Arabidopsis thaliana (Mouse-ear cress).